A 97-amino-acid polypeptide reads, in one-letter code: Stefin-1 (97 aa).

The Secondary area of contact signature appears at 46 to 50 (QVVAG).

Belongs to the cystatin family.

Its subcellular location is the cytoplasm. Its function is as follows. This is an intracellular thiol proteinase inhibitor. This chain is Stefin-1 (Stfa1), found in Mus musculus (Mouse).